Here is a 1914-residue protein sequence, read N- to C-terminus: Autophagy-related protein 2 homolog A (1914 aa).

One can recognise a Chorein N-terminal domain in the interval 14 to 112; sequence ERVCRYLLQH…LTLQPRQGSG (99 aa). Phosphoserine is present on residues S764, S869, S875, and S877. The interval 1222 to 1243 is disordered; sequence DLHPPPRPPSPTEIAGQKLSES. S1246, S1282, and S1290 each carry phosphoserine. Residues 1299–1337 form a disordered region; that stretch reads GERSGAQAPLPPPGASSHTLGSKAKEHENEEEGDGDTLD. Positions 1327-1337 are enriched in acidic residues; sequence NEEEGDGDTLD. Residues 1337–1383 are WIPI-interacting; sequence DSDEFCILDAPGLGIAPRDGEPIVTQLHPGPIIVHDGHFSQPLGSTD. S1381 is modified (phosphoserine). 3 disordered regions span residues 1427 to 1452, 1589 to 1634, and 1803 to 1822; these read LTGP…TQGG, MVPG…SSSD, and RSLQ…QPAD. A compositionally biased stretch (low complexity) spans 1429-1446; that stretch reads GPRVSPSRSSGPNRPQNS.

It belongs to the ATG2 family. In terms of assembly, interacts with ATG9A (via C-terminus). Interacts with TMEM41B. Interacts with VMP1.

Its subcellular location is the preautophagosomal structure membrane. It localises to the lipid droplet. The protein resides in the endoplasmic reticulum membrane. The catalysed reaction is a 1,2-diacyl-sn-glycero-3-phospho-L-serine(in) = a 1,2-diacyl-sn-glycero-3-phospho-L-serine(out). It catalyses the reaction a 1,2-diacyl-sn-glycero-3-phosphoethanolamine(in) = a 1,2-diacyl-sn-glycero-3-phosphoethanolamine(out). Functionally, lipid transfer protein involved in autophagosome assembly. Tethers the edge of the isolation membrane (IM) to the endoplasmic reticulum (ER) and mediates direct lipid transfer from ER to IM for IM expansion. Binds to the ER exit site (ERES), which is the membrane source for autophagosome formation, and extracts phospholipids from the membrane source and transfers them to ATG9 (ATG9A or ATG9B) to the IM for membrane expansion. Lipid transfer activity is enhanced by WIPI1 and WDR45/WIPI4, which promote ATG2A-association with phosphatidylinositol 3-monophosphate (PI3P)-containing membranes. Also regulates lipid droplets morphology and distribution within the cell. (Microbial infection) Mediates the intracellular lifestyle of Cryptococcus neoformans by supporting infection. The sequence is that of Autophagy-related protein 2 homolog A from Mus musculus (Mouse).